The following is a 206-amino-acid chain: Thymidylate kinase (206 aa).

Position 14-21 (14-21) interacts with ATP; the sequence is GGEGIGKS.

The protein belongs to the thymidylate kinase family.

It carries out the reaction dTMP + ATP = dTDP + ADP. Its function is as follows. Phosphorylation of dTMP to form dTDP in both de novo and salvage pathways of dTTP synthesis. The chain is Thymidylate kinase from Rickettsia bellii (strain OSU 85-389).